The chain runs to 165 residues: MSLPDKAFPVSWDQFHRDARALAWRIAGLDREWRAIVAITRGGLVPAAIICRELGIRLIEIVCIASYHDYTSQGEMQVLKGIGASLLENQGEGVIVVDDLTDTGKTAAIVREMMPRAHFATVYAKPKGRPLIDTFVTEVSQDTWIYFPWDMGFTYQEPIAGGKRG.

Residues 41–42 (RG) and 98–106 (DDLTDTGKT) each bind 5-phospho-alpha-D-ribose 1-diphosphate. Asp-99 provides a ligand contact to Mg(2+). The guanine site is built by Asp-102 and Ile-145. Residues Asp-102 and Ile-145 each coordinate xanthine. GMP contacts are provided by residues 102 to 106 (DTGKT) and 144 to 145 (WI).

It belongs to the purine/pyrimidine phosphoribosyltransferase family. XGPT subfamily. As to quaternary structure, homotetramer. Mg(2+) serves as cofactor.

The protein localises to the cell inner membrane. The catalysed reaction is GMP + diphosphate = guanine + 5-phospho-alpha-D-ribose 1-diphosphate. The enzyme catalyses XMP + diphosphate = xanthine + 5-phospho-alpha-D-ribose 1-diphosphate. It carries out the reaction IMP + diphosphate = hypoxanthine + 5-phospho-alpha-D-ribose 1-diphosphate. The protein operates within purine metabolism; GMP biosynthesis via salvage pathway; GMP from guanine: step 1/1. Its pathway is purine metabolism; XMP biosynthesis via salvage pathway; XMP from xanthine: step 1/1. Functionally, purine salvage pathway enzyme that catalyzes the transfer of the ribosyl-5-phosphate group from 5-phospho-alpha-D-ribose 1-diphosphate (PRPP) to the N9 position of the 6-oxopurines guanine and xanthine to form the corresponding ribonucleotides GMP (guanosine 5'-monophosphate) and XMP (xanthosine 5'-monophosphate), with the release of PPi. To a lesser extent, also acts on hypoxanthine. This is Xanthine-guanine phosphoribosyltransferase from Brucella suis (strain ATCC 23445 / NCTC 10510).